The sequence spans 346 residues: Ribosomal RNA small subunit methyltransferase H (346 aa).

S-adenosyl-L-methionine-binding positions include 47-49 (GGY), D65, F92, D113, and Q120. The segment covering 270–279 (RGEAPSRRLP) has biased composition (basic and acidic residues). The disordered stretch occupies residues 270 to 346 (RGEAPSRRLP…ALPQRAAKGR (77 aa)).

It belongs to the methyltransferase superfamily. RsmH family.

Its subcellular location is the cytoplasm. It catalyses the reaction cytidine(1402) in 16S rRNA + S-adenosyl-L-methionine = N(4)-methylcytidine(1402) in 16S rRNA + S-adenosyl-L-homocysteine + H(+). In terms of biological role, specifically methylates the N4 position of cytidine in position 1402 (C1402) of 16S rRNA. In Methylocella silvestris (strain DSM 15510 / CIP 108128 / LMG 27833 / NCIMB 13906 / BL2), this protein is Ribosomal RNA small subunit methyltransferase H.